The sequence spans 131 residues: Small ribosomal subunit protein uS8 (131 aa).

This sequence belongs to the universal ribosomal protein uS8 family. In terms of assembly, part of the 30S ribosomal subunit. Contacts proteins S5 and S12.

Its function is as follows. One of the primary rRNA binding proteins, it binds directly to 16S rRNA central domain where it helps coordinate assembly of the platform of the 30S subunit. The sequence is that of Small ribosomal subunit protein uS8 from Albidiferax ferrireducens (strain ATCC BAA-621 / DSM 15236 / T118) (Rhodoferax ferrireducens).